An 89-amino-acid polypeptide reads, in one-letter code: UPF0367 protein PCC8801_1959 (89 aa).

The protein belongs to the UPF0367 family.

The protein is UPF0367 protein PCC8801_1959 of Rippkaea orientalis (strain PCC 8801 / RF-1) (Cyanothece sp. (strain PCC 8801)).